We begin with the raw amino-acid sequence, 298 residues long: Protease HtpX homolog (298 aa).

2 helical membrane-spanning segments follow: residues 14-34 (ILVM…IGYL) and 39-59 (VIGG…VIIG). Zn(2+) is bound at residue H144. E145 is a catalytic residue. H148 serves as a coordination point for Zn(2+). Transmembrane regions (helical) follow at residues 159-179 (IALA…NFWW) and 195-215 (IFAI…ATIA). E224 serves as a coordination point for Zn(2+).

Belongs to the peptidase M48B family. The cofactor is Zn(2+).

The protein resides in the cell membrane. This Limosilactobacillus reuteri (strain DSM 20016) (Lactobacillus reuteri) protein is Protease HtpX homolog.